A 425-amino-acid chain; its full sequence is MDVRSMARQARAAQRQLELTSPEERNAALEAIARALEARAGQIVAANRADLAAAEEAGLPGPMIARLRLDEGKLAGVIRGVRAVAELPDPLAVEPQAWIRPNGLRIQRVRVPLGVVGIIYESRPGVTVDAAVLCLKAGNAVLLKGGKEAARSNAALGEAMAAGLQEVGLPVELAQVLPSTREAAQELMAARSLVDVLIPRGGAGLIRATVEQSQVPVIETGTGVCHVYVHRAADLAMAREIVLNAKCSNPAVCNAAETLLVDREVAAPFLAEAGPALLAAGVRLRACPEALAILQETARPDLAGAGPAAVEPATEEDWAAEYLDLCLAVKVVSGLDEALAHIARYGTGHSEAIVTGDAGAADRFLRSVDAAAVYHNASTRFTDGGEFGFGAEIGISTQKLHARGPMGLAELTTYKYVVLGNGQVR.

The protein belongs to the gamma-glutamyl phosphate reductase family.

Its subcellular location is the cytoplasm. It carries out the reaction L-glutamate 5-semialdehyde + phosphate + NADP(+) = L-glutamyl 5-phosphate + NADPH + H(+). The protein operates within amino-acid biosynthesis; L-proline biosynthesis; L-glutamate 5-semialdehyde from L-glutamate: step 2/2. Catalyzes the NADPH-dependent reduction of L-glutamate 5-phosphate into L-glutamate 5-semialdehyde and phosphate. The product spontaneously undergoes cyclization to form 1-pyrroline-5-carboxylate. The protein is Gamma-glutamyl phosphate reductase of Symbiobacterium thermophilum (strain DSM 24528 / JCM 14929 / IAM 14863 / T).